We begin with the raw amino-acid sequence, 616 residues long: Probable Xaa-Pro aminopeptidase P (616 aa).

The Mn(2+) site is built by aspartate 413, aspartate 424, glutamate 522, and glutamate 536.

It belongs to the peptidase M24B family. The cofactor is Mn(2+).

The enzyme catalyses Release of any N-terminal amino acid, including proline, that is linked to proline, even from a dipeptide or tripeptide.. Its function is as follows. Catalyzes the removal of a penultimate prolyl residue from the N-termini of peptides. The sequence is that of Probable Xaa-Pro aminopeptidase P (AMPP) from Paracoccidioides brasiliensis (strain Pb18).